We begin with the raw amino-acid sequence, 135 residues long: ATP synthase epsilon chain (135 aa).

The protein belongs to the ATPase epsilon chain family. F-type ATPases have 2 components, CF(1) - the catalytic core - and CF(0) - the membrane proton channel. CF(1) has five subunits: alpha(3), beta(3), gamma(1), delta(1), epsilon(1). CF(0) has three main subunits: a, b and c.

It localises to the cell inner membrane. In terms of biological role, produces ATP from ADP in the presence of a proton gradient across the membrane. This chain is ATP synthase epsilon chain, found in Bradyrhizobium sp. (strain ORS 278).